The following is a 410-amino-acid chain: Cysteine desulfurase IscS (410 aa).

Pyridoxal 5'-phosphate contacts are provided by residues 80–81 (AT), Asn160, Gln188, and 208–210 (SGH). N6-(pyridoxal phosphate)lysine is present on Lys211. Thr248 provides a ligand contact to pyridoxal 5'-phosphate. The active-site Cysteine persulfide intermediate is the Cys334. Cys334 contacts [2Fe-2S] cluster.

It belongs to the class-V pyridoxal-phosphate-dependent aminotransferase family. NifS/IscS subfamily. As to quaternary structure, homodimer. Forms a heterotetramer with IscU, interacts with other sulfur acceptors. Requires pyridoxal 5'-phosphate as cofactor.

The protein localises to the cytoplasm. The enzyme catalyses (sulfur carrier)-H + L-cysteine = (sulfur carrier)-SH + L-alanine. It functions in the pathway cofactor biosynthesis; iron-sulfur cluster biosynthesis. Functionally, master enzyme that delivers sulfur to a number of partners involved in Fe-S cluster assembly, tRNA modification or cofactor biosynthesis. Catalyzes the removal of elemental sulfur atoms from cysteine to produce alanine. Functions as a sulfur delivery protein for Fe-S cluster synthesis onto IscU, an Fe-S scaffold assembly protein, as well as other S acceptor proteins. The chain is Cysteine desulfurase IscS from Rickettsia africae (strain ESF-5).